Here is a 118-residue protein sequence, read N- to C-terminus: Small ribosomal subunit protein uS13 (118 aa).

The tract at residues 93-118 (RGLPVRGQRTKTNARTRKGPRKPIRK) is disordered.

The protein belongs to the universal ribosomal protein uS13 family. Part of the 30S ribosomal subunit. Forms a loose heterodimer with protein S19. Forms two bridges to the 50S subunit in the 70S ribosome.

Its function is as follows. Located at the top of the head of the 30S subunit, it contacts several helices of the 16S rRNA. In the 70S ribosome it contacts the 23S rRNA (bridge B1a) and protein L5 of the 50S subunit (bridge B1b), connecting the 2 subunits; these bridges are implicated in subunit movement. Contacts the tRNAs in the A and P-sites. The sequence is that of Small ribosomal subunit protein uS13 from Pseudomonas fluorescens (strain Pf0-1).